The following is a 64-amino-acid chain: Sulfur carrier protein ThiS (64 aa).

A 1-thioglycine; alternate modification is found at Gly-64. Residue Gly-64 is modified to Glycyl adenylate; alternate. Residue Gly-64 forms a Glycyl cysteine thioester (Gly-Cys) (interchain with C-192 in TtuC); alternate linkage.

Belongs to the sulfur carrier protein ThiS family. C-terminal thiocarboxylation occurs in 2 steps, it is first acyl-adenylated (-COAMP) by TtuC, then thiocarboxylated (-COSH) by the cysteine desulfurases IscS or SufS.

The protein operates within cofactor biosynthesis; thiamine diphosphate biosynthesis. Is the sulfur donor in the synthesis of the thiazole phosphate moiety of thiamine phosphate. In Thermus thermophilus (strain ATCC BAA-163 / DSM 7039 / HB27), this protein is Sulfur carrier protein ThiS.